The chain runs to 263 residues: uncharacterized protein (263 aa).

The next 7 membrane-spanning stretches (helical) occupy residues 53–73 (FWII…LVKI), 103–123 (GFLF…LPGL), 130–150 (IILP…VFSY), 153–173 (LIPA…EPLW), 181–201 (FILV…IQIL), 213–233 (MLAA…ILTP), and 241–261 (LLLS…LFLI).

It belongs to the TatC family.

The protein resides in the plastid. The protein localises to the chloroplast membrane. This is an uncharacterized protein from Trieres chinensis (Marine centric diatom).